Reading from the N-terminus, the 220-residue chain is Cell division protein DedD (220 aa).

A helical membrane pass occupies residues L9–G29. Disordered regions lie at residues K46–S84 and F97–A137. The span at P57–G70 shows a compositional bias: low complexity. The span at E100–P109 shows a compositional bias: pro residues. Basic and acidic residues-rich tracts occupy residues K110–V119 and P127–A137. The region spanning A138–Y217 is the SPOR domain.

It belongs to the DedD family.

Its subcellular location is the cell inner membrane. Non-essential cell division protein that could be required for efficient cell constriction. This is Cell division protein DedD from Escherichia coli (strain K12).